The primary structure comprises 387 residues: Pepsin A (387 aa).

The first 16 residues, 1–16 (MKKLLLLLGLVALSEC), serve as a signal peptide directing secretion. Positions 17 to 61 (LYKVPLVKKKSLRQNLIENGLLKDFLAKHNVNPASKYFPTEAATE) are cleaved as a propeptide — activation peptide. The Peptidase A1 domain maps to 75–384 (YFGTIGIGTP…DRGNNRVGLA (310 aa)). Residue Asp93 is part of the active site. Residues Cys106 and Cys111 are joined by a disulfide bond. Residue Ser129 is modified to Phosphoserine. A disulfide bridge connects residues Cys267 and Cys271. Asp276 is a catalytic residue. An intrachain disulfide couples Cys310 to Cys343.

This sequence belongs to the peptidase A1 family.

It is found in the secreted. It carries out the reaction Preferential cleavage: hydrophobic, preferably aromatic, residues in P1 and P1' positions. Cleaves 1-Phe-|-Val-2, 4-Gln-|-His-5, 13-Glu-|-Ala-14, 14-Ala-|-Leu-15, 15-Leu-|-Tyr-16, 16-Tyr-|-Leu-17, 23-Gly-|-Phe-24, 24-Phe-|-Phe-25 and 25-Phe-|-Tyr-26 bonds in the B chain of insulin.. Shows particularly broad specificity; although bonds involving phenylalanine and leucine are preferred, many others are also cleaved to some extent. The sequence is that of Pepsin A (PGA) from Suncus murinus (Asian house shrew).